The primary structure comprises 374 residues: Carbamoyl phosphate synthase small chain (374 aa).

The CPSase stretch occupies residues 1–183 (MVLADGQMIW…QNGYSVVDNQ (183 aa)). Positions 41, 235, and 237 each coordinate L-glutamine. The Glutamine amidotransferase type-1 domain occupies 187-374 (HVVAIDYGLK…FIDLIAKERP (188 aa)). The active-site Nucleophile is cysteine 264. Leucine 265, glutamine 268, asparagine 306, glycine 308, and phenylalanine 309 together coordinate L-glutamine. Residues histidine 348 and glutamate 350 contribute to the active site.

Belongs to the CarA family. Composed of two chains; the small (or glutamine) chain promotes the hydrolysis of glutamine to ammonia, which is used by the large (or ammonia) chain to synthesize carbamoyl phosphate. Tetramer of heterodimers (alpha,beta)4.

The enzyme catalyses hydrogencarbonate + L-glutamine + 2 ATP + H2O = carbamoyl phosphate + L-glutamate + 2 ADP + phosphate + 2 H(+). It carries out the reaction L-glutamine + H2O = L-glutamate + NH4(+). The protein operates within amino-acid biosynthesis; L-arginine biosynthesis; carbamoyl phosphate from bicarbonate: step 1/1. Its pathway is pyrimidine metabolism; UMP biosynthesis via de novo pathway; (S)-dihydroorotate from bicarbonate: step 1/3. In terms of biological role, small subunit of the glutamine-dependent carbamoyl phosphate synthetase (CPSase). CPSase catalyzes the formation of carbamoyl phosphate from the ammonia moiety of glutamine, carbonate, and phosphate donated by ATP, constituting the first step of 2 biosynthetic pathways, one leading to arginine and/or urea and the other to pyrimidine nucleotides. The small subunit (glutamine amidotransferase) binds and cleaves glutamine to supply the large subunit with the substrate ammonia. The polypeptide is Carbamoyl phosphate synthase small chain (Zymomonas mobilis subsp. mobilis (strain ATCC 31821 / ZM4 / CP4)).